A 659-amino-acid polypeptide reads, in one-letter code: Anoctamin-10 (659 aa).

The Cytoplasmic segment spans residues 1-207; it reads MRVTLSTLDT…DSIRSYFGET (207 aa). Residues 208–228 form a helical membrane-spanning segment; sequence IALYFGFLEYFTFALIPMAII. At 229–240 the chain is on the extracellular side; that stretch reads GLPYYLFVWEDY. The chain crosses the membrane as a helical span at residues 241–261; the sequence is DKYVIFASFNLIWSTVILEVW. Over 262-316 the chain is Cytoplasmic; it reads KRGCANMTYRWGTLVMKRQFEEPRPGFHGVLGINSVTGREEPLYSSYKRQLRIYL. The helical transmembrane segment at 317–337 threads the bilayer; the sequence is VSLPFVCLCLYFSLYVMMIYF. Topologically, residues 338-352 are extracellular; the sequence is DMEDWALSLHEDSGS. A helical membrane pass occupies residues 353 to 373; sequence EWTSLLLYVPSIVYAVVIEIM. Residues 374–400 lie on the Cytoplasmic side of the membrane; the sequence is NRLYRYAAEFLTSWENHRLESAYQNHL. The chain crosses the membrane as a helical span at residues 401–421; sequence VLKVLVFNFLNCFASLFYIAF. Residues 422 to 500 lie on the Extracellular side of the membrane; sequence VLKDMKLLRQ…YLGTFDDYLE (79 aa). A helical transmembrane segment spans residues 501-521; sequence LFLQFGYVSLFSCVYPLAAAF. The Cytoplasmic segment spans residues 522–553; the sequence is AVLNNFTEVNSDALKMCRVFKRPFAEPSASIG. Residues 554 to 574 traverse the membrane as a helical segment; the sequence is VWQLAFETMSVISVVTNCALI. Over 575–590 the chain is Extracellular; that stretch reads GMSPQVNAVFPESKTD. Residues 591–611 form a helical membrane-spanning segment; the sequence is LVLIVVAVEHALLALKFILAF. Residues 612–659 are Cytoplasmic-facing; sequence AIPDKPRHIQQKLARLEFESLEALKQQQMKLVAENLKEEYQEDGKEAT.

This sequence belongs to the anoctamin family. In terms of tissue distribution, predominant expression seen in epithelial tissues.

The protein localises to the cell membrane. In terms of biological role, does not exhibit calcium-activated chloride channel (CaCC) activity. Can inhibit the activity of ANO1. This chain is Anoctamin-10 (Ano10), found in Mus musculus (Mouse).